Consider the following 1706-residue polypeptide: Histone acetyltransferase HAC12 (1706 aa).

Disordered stretches follow at residues 1-33, 251-284, 397-456, and 524-543; these read MNVQ…MQNL, TNNN…NSHM, VSRV…LGKT, and QNSQ…SDSS. Over residues 397-406 the composition is skewed to polar residues; sequence VSRVNSSLSH. The span at 407-434 shows a compositional bias: low complexity; the sequence is QQQFQQPPNRFQQQPNQIQQQQQQFLNQ. The segment at 637 to 716 adopts a TAZ-type 1 zinc-finger fold; it reads HDPKFKNQQR…DPRCPVCVPV (80 aa). The disordered stretch occupies residues 791 to 909; the sequence is TESCKSSIVS…PELTSKSRKP (119 aa). Over residues 794–805 the composition is skewed to polar residues; sequence CKSSIVSTTEAD. 2 stretches are compositionally biased toward basic and acidic residues: residues 809 to 829 and 870 to 896; these read DAER…KVEI and PKQE…KEEL. The PHD-type zinc finger occupies 998-1075; the sequence is HYFCIPCYNE…EYTCPYCYVI (78 aa). A CBP/p300-type HAT domain is found at 1090–1526; it reads VLGAKDLPRT…VLYHLHNPTA (437 aa). Acetyl-CoA is bound by residues 1213–1215, 1232–1233, and Trp1288; these read LDS and RT. ZZ-type zinc fingers lie at residues 1408 to 1471 and 1528 to 1581; these read HLQH…IADI and AFVT…SLAD. Residues Cys1413, Cys1416, Cys1428, Cys1431, Cys1437, Cys1440, His1453, His1461, Cys1533, Cys1536, Cys1548, Cys1551, Cys1557, Cys1560, His1569, and His1571 each coordinate Zn(2+). A TAZ-type 2 zinc finger spans residues 1588–1671; that stretch reads EARQLRVLQL…ECDVPRCGDL (84 aa).

The protein localises to the nucleus. The enzyme catalyses L-lysyl-[protein] + acetyl-CoA = N(6)-acetyl-L-lysyl-[protein] + CoA + H(+). Functionally, acetyltransferase enzyme. Acetylates histones, giving a specific tag for transcriptional activation. The sequence is that of Histone acetyltransferase HAC12 (HAC12) from Arabidopsis thaliana (Mouse-ear cress).